A 255-amino-acid chain; its full sequence is S-adenosyl-L-methionine-dependent uroporphyrinogen III methyltransferase (255 aa).

S-adenosyl-L-homocysteine is bound by residues Pro15, 91–93, 121–122, Met175, and Ala232; these read GGD and TS.

Belongs to the precorrin methyltransferase family. Homodimer.

It carries out the reaction uroporphyrinogen III + 2 S-adenosyl-L-methionine = precorrin-2 + 2 S-adenosyl-L-homocysteine + H(+). The protein operates within porphyrin-containing compound metabolism; siroheme biosynthesis; precorrin-2 from uroporphyrinogen III: step 1/1. Involved in the archaeal biosynthesis of heme. Catalyzes the methylation of carbons 2 and 7 of uroporphyrinogen-III (UROGEN) to yield precorrin-2. It does not catalyze the overmethylation of precorrin-2 to trimethylpyrrocorphin. This is S-adenosyl-L-methionine-dependent uroporphyrinogen III methyltransferase from Methanosarcina barkeri (strain Fusaro / DSM 804).